Here is a 1169-residue protein sequence, read N- to C-terminus: Phospholipid-transporting ATPase IF (1169 aa).

The Cytoplasmic segment spans residues 1 to 47 (LGFDPPHQSDTRTIYIANRFPQNGLYTPQKFIDNRIISSKYTVWNFV). A helical membrane pass occupies residues 48–69 (PKNLFEQFRRVANFYFLIIFLV). Over 70 to 74 (QLMID) the chain is Extracellular. A helical membrane pass occupies residues 75–96 (TPTSPITSGLPLFFVITVTAIK). Topologically, residues 97-281 (QGYEDWLRHN…SAVEKSMNTF (185 aa)) are cytoplasmic. Residues 282–303 (LIIYLIILISEAIISTILKYTW) traverse the membrane as a helical segment. Residues 304–333 (QAEEKWDEPWYNQKTEHQRNSSKILRFISD) lie on the Extracellular side of the membrane. Residues 334 to 351 (FLAFLVLYNFIIPISLYV) traverse the membrane as a helical segment. The Cytoplasmic segment spans residues 352-868 (TVEMQKFLGS…HGHFYYIRIA (517 aa)). D399 functions as the 4-aspartylphosphate intermediate in the catalytic mechanism. ATP-binding residues include D399, K400, T401, E523, F564, K587, R618, T698, G699, D700, R786, and K792. D399 contributes to the Mg(2+) binding site. Residue T401 participates in Mg(2+) binding. The segment at 794-802 (KVIRLIKIS) is required for binding to the RING-finger of HLTF. D813 is a Mg(2+) binding site. Positions 816 and 817 each coordinate ATP. Residue D817 participates in Mg(2+) binding. A helical membrane pass occupies residues 869–890 (TLVQYFFYKNVCFITPQFLYQF). The Extracellular segment spans residues 891–902 (YCLFSQQTLYDS). Residues 903–922 (VYLTLYNICFTSLPILIYSL) form a helical membrane-spanning segment. The Cytoplasmic portion of the chain corresponds to 923–952 (LEQHIDPHILQNKPTLYRDISKNRLLSIKT). The helical transmembrane segment at 953–974 (FLYWTILGFSRSFIFLFGSYFL) threads the bilayer. Residues 975 to 989 (IGKDASLLGNGQMFG) are Extracellular-facing. The chain crosses the membrane as a helical span at residues 990-1012 (NWTFGTLVFTVMVITVTVKMALE). Over 1013–1017 (THFWT) the chain is Cytoplasmic. Residues 1018-1039 (WINHLVTWGSIIFYFVFSLFYG) traverse the membrane as a helical segment. At 1040–1057 (GILWPFLGSQNMYFVFIQ) the chain is on the extracellular side. A helical membrane pass occupies residues 1058-1082 (LVSSGSAWFAIILMVVTCLFLDVMK). Over 1083–1169 (KVFDRQLHPT…TLSTMDSSTC (87 aa)) the chain is Cytoplasmic. S1146 is subject to Phosphoserine.

This sequence belongs to the cation transport ATPase (P-type) (TC 3.A.3) family. Type IV subfamily. Component of a P4-ATPase flippase complex which consists of a catalytic alpha subunit ATP11B and an accessory beta subunit TMEM30A. In terms of assembly, interacts with HLTF (via the RING-finger). Requires Mg(2+) as cofactor. In terms of tissue distribution, ubiquitously expressed.

It localises to the recycling endosome membrane. The protein resides in the early endosome. The protein localises to the endoplasmic reticulum. It is found in the golgi apparatus. Its subcellular location is the trans-Golgi network. It localises to the nucleus inner membrane. The enzyme catalyses ATP + H2O + phospholipidSide 1 = ADP + phosphate + phospholipidSide 2.. It carries out the reaction a 1,2-diacyl-sn-glycero-3-phospho-L-serine(out) + ATP + H2O = a 1,2-diacyl-sn-glycero-3-phospho-L-serine(in) + ADP + phosphate + H(+). It catalyses the reaction a 1,2-diacyl-sn-glycero-3-phosphoethanolamine(out) + ATP + H2O = a 1,2-diacyl-sn-glycero-3-phosphoethanolamine(in) + ADP + phosphate + H(+). Functionally, catalytic component of a P4-ATPase flippase complex which catalyzes the hydrolysis of ATP coupled to the transport of aminophospholipids, phosphatidylserines (PS) and phosphatidylethanolamines (PE), from the outer to the inner leaflet of intracellular membranes. May contribute to the maintenance of membrane lipid asymmetry in endosome compartment. Its function is as follows. Appears to play a role in the subnuclear trafficking of transcription factors with RING motifs. The chain is Phospholipid-transporting ATPase IF (ATP11B) from Oryctolagus cuniculus (Rabbit).